The following is a 129-amino-acid chain: Serum amyloid A-2 protein (129 aa).

A signal peptide spans Met-1 to Ser-18. Gln-19 carries the pyrrolidone carboxylic acid modification. Positions Gly-92 to Tyr-129 are disordered.

The protein belongs to the SAA family. In terms of assembly, apolipoprotein of the HDL complex. As to expression, expressed by the liver; secreted in plasma.

It is found in the secreted. Its function is as follows. Major acute phase reactant. The polypeptide is Serum amyloid A-2 protein (SAA2P0DJI9) (Neovison vison (American mink)).